A 424-amino-acid polypeptide reads, in one-letter code: MLDLKLLQKNPEVVAKALAMRHSDIDIATFTTLDTRRRALLTEVESLKSERNKASAEVAKAKRAGEDASALIERLGGVSERIKALDLEAEAVKSEQNDWMLTIPNIPHESVPEGRDENDNVEVLRWGTPRAFSFTPREHWDIGVALGGLDFERAGKLAGSRFTVYWKWAARLERALANYFLDTHISANGYTEVLPPFMVNRKTMTGTGQLPKFEEDLFRLESWDYFLIPTAEVPLTNLHADEILEEGDLPLGYTAQTPCFRSEAGSYGKDTRGLIRQHQFTKVEMVRFAHPERSFDELERMRGHAEALLQNLGLPYRVITLCSGDMGFSATKTYDLEVWLPGQDKYREISSCSNCGDFQARRANIRFRPAGGGKPEFVHTLNGSGLAVGRTLVAVLENYQQEDGSVIVPEVLRPYMGGLERITA.

230 to 232 contributes to the L-serine binding site; it reads TAE. 261–263 is a binding site for ATP; that stretch reads RSE. L-serine is bound at residue E284. 348–351 provides a ligand contact to ATP; that stretch reads EISS. L-serine is bound at residue S384.

Belongs to the class-II aminoacyl-tRNA synthetase family. Type-1 seryl-tRNA synthetase subfamily. Homodimer. The tRNA molecule binds across the dimer.

It localises to the cytoplasm. The catalysed reaction is tRNA(Ser) + L-serine + ATP = L-seryl-tRNA(Ser) + AMP + diphosphate + H(+). It carries out the reaction tRNA(Sec) + L-serine + ATP = L-seryl-tRNA(Sec) + AMP + diphosphate + H(+). The protein operates within aminoacyl-tRNA biosynthesis; selenocysteinyl-tRNA(Sec) biosynthesis; L-seryl-tRNA(Sec) from L-serine and tRNA(Sec): step 1/1. Catalyzes the attachment of serine to tRNA(Ser). Is also able to aminoacylate tRNA(Sec) with serine, to form the misacylated tRNA L-seryl-tRNA(Sec), which will be further converted into selenocysteinyl-tRNA(Sec). The polypeptide is Serine--tRNA ligase (Nitratidesulfovibrio vulgaris (strain ATCC 29579 / DSM 644 / CCUG 34227 / NCIMB 8303 / VKM B-1760 / Hildenborough) (Desulfovibrio vulgaris)).